Here is a 61-residue protein sequence, read N- to C-terminus: Probable tautomerase stu1128 (61 aa).

The Proton acceptor; via imino nitrogen role is filled by Pro2.

The protein belongs to the 4-oxalocrotonate tautomerase family.

The protein is Probable tautomerase stu1128 of Streptococcus thermophilus (strain ATCC BAA-250 / LMG 18311).